The chain runs to 62 residues: Phycobilisome degradation protein NblA homolog 1 (62 aa).

This sequence to Synechococcus PCC 7942 NblA and some, to chloroplast ycf18.

The sequence is that of Phycobilisome degradation protein NblA homolog 1 from Synechocystis sp. (strain ATCC 27184 / PCC 6803 / Kazusa).